We begin with the raw amino-acid sequence, 1283 residues long: uncharacterized protein (1283 aa).

Positions 10–46 (ACPPNTFTCADGSCIPSDWKGDGEKDCEDGSDEEAVT) constitute an LDL-receptor class A domain. 2 cysteine pairs are disulfide-bonded: C11–C23 and C18–C36. Residues 27–47 (DWKGDGEKDCEDGSDEEAVTG) are disordered. Acidic residues predominate over residues 34 to 45 (KDCEDGSDEEAV). N79 carries an N-linked (GlcNAc...) asparagine glycan. Residues 236 to 278 (STTLIVDETTESTSASAEDDDDDVLTTNTSEESTATTAHDEEV) are disordered. Positions 261–272 (TTNTSEESTATT) are enriched in low complexity. Residues 332–389 (YQKTLEKEKCAIRNATSKCEALISYNNNLDCAIVTMNDECEVDAQNLVVELQEEVNDL) adopt a coiled-coil conformation. 2 disordered regions span residues 621–651 (ARPTPVTMPPRAPTAKPLPIPSAPTPPVASS) and 1005–1046 (SSST…PTDG). Residues 626–647 (VTMPPRAPTAKPLPIPSAPTPP) are compositionally biased toward pro residues. The span at 1005–1015 (SSSTMVSTSSE) shows a compositional bias: low complexity. The span at 1016–1026 (SDSESAPEQET) shows a compositional bias: acidic residues. A compositionally biased stretch (low complexity) spans 1027–1044 (EPTVPSTTETTESPSTPT). The chain crosses the membrane as a helical span at residues 1263 to 1283 (VQSSVSFHIILAALIPFFALF).

It is found in the membrane. This is an uncharacterized protein from Caenorhabditis elegans.